A 98-amino-acid polypeptide reads, in one-letter code: NADH-ubiquinone oxidoreductase chain 4L (98 aa).

3 helical membrane-spanning segments follow: residues 1–21 (MALT…GLLM), 29–49 (SLLC…LTIL), and 61–81 (IILL…LVMV).

This sequence belongs to the complex I subunit 4L family. As to quaternary structure, core subunit of respiratory chain NADH dehydrogenase (Complex I) which is composed of 45 different subunits.

Its subcellular location is the mitochondrion inner membrane. It carries out the reaction a ubiquinone + NADH + 5 H(+)(in) = a ubiquinol + NAD(+) + 4 H(+)(out). In terms of biological role, core subunit of the mitochondrial membrane respiratory chain NADH dehydrogenase (Complex I) which catalyzes electron transfer from NADH through the respiratory chain, using ubiquinone as an electron acceptor. Part of the enzyme membrane arm which is embedded in the lipid bilayer and involved in proton translocation. This chain is NADH-ubiquinone oxidoreductase chain 4L (MT-ND4L), found in Pteropus dasymallus (Ryukyu flying fox).